We begin with the raw amino-acid sequence, 686 residues long: Glycogenin (686 aa).

Residues Leu-13, Asn-16, Tyr-19, and Arg-82 each coordinate UDP. Positions 13, 16, 19, 82, 91, 107, 108, 109, 139, 140, 166, 169, and 170 each coordinate UDP-alpha-D-glucose. UDP contacts are provided by Asp-107, Ala-108, and Asp-109. A Mn(2+)-binding site is contributed by Asp-107. Residue Asp-109 participates in Mn(2+) binding. 2 O-linked (Glc...) tyrosine glycosylation sites follow: Tyr-196 and Tyr-198. UDP is bound by residues His-213, Gly-216, and Lys-219. Residue His-213 participates in Mn(2+) binding. Residues Gly-216 and Lys-219 each contribute to the UDP-alpha-D-glucose site. Disordered regions lie at residues 264-331 (VKGE…ANFP), 381-444 (PEPT…RGNA), 460-533 (KHRR…GVPA), and 603-686 (KPLR…VLET). Composition is skewed to low complexity over residues 285–308 (SSQS…YTSH) and 398–416 (SAAS…ASPT). Positions 307–686 (SHGASWDASR…TEEERDVLET (380 aa)) are not required for catalytic activity. 2 stretches are compositionally biased toward polar residues: residues 424–442 (VTPT…TTRG) and 471–483 (AATS…GRAQ). A compositionally biased stretch (acidic residues) spans 677-686 (TEEERDVLET).

The protein belongs to the glycosyltransferase 8 family. Glycogenin subfamily. Interacts with glycogen synthase gsy-1; the interaction is direct. Requires Mn(2+) as cofactor.

Its subcellular location is the cytoplasm. The protein resides in the vacuole. The enzyme catalyses L-tyrosyl-[glycogenin] + UDP-alpha-D-glucose = alpha-D-glucosyl-L-tyrosyl-[glycogenin] + UDP + H(+). It catalyses the reaction [1,4-alpha-D-glucosyl](n)-L-tyrosyl-[glycogenin] + UDP-alpha-D-glucose = [1,4-alpha-D-glucosyl](n+1)-L-tyrosyl-[glycogenin] + UDP + H(+). Self-glucosylating initiator of glycogen synthesis. It catalyzes the formation of a short alpha (1,4)-glucosyl chain covalently attached via a glucose 1-O-tyrosyl linkage to internal tyrosine residues and these chains act as primers for the elongation reaction catalyzed by glycogen synthase. The polypeptide is Glycogenin (Neurospora crassa (strain ATCC 24698 / 74-OR23-1A / CBS 708.71 / DSM 1257 / FGSC 987)).